Reading from the N-terminus, the 244-residue chain is Phosphoadenosine 5'-phosphosulfate reductase (244 aa).

Cys239 acts as the Nucleophile; cysteine thiosulfonate intermediate in catalysis.

This sequence belongs to the PAPS reductase family. CysH subfamily.

It localises to the cytoplasm. It catalyses the reaction [thioredoxin]-disulfide + sulfite + adenosine 3',5'-bisphosphate + 2 H(+) = [thioredoxin]-dithiol + 3'-phosphoadenylyl sulfate. It functions in the pathway sulfur metabolism; hydrogen sulfide biosynthesis; sulfite from sulfate: step 3/3. In terms of biological role, catalyzes the formation of sulfite from phosphoadenosine 5'-phosphosulfate (PAPS) using thioredoxin as an electron donor. This chain is Phosphoadenosine 5'-phosphosulfate reductase, found in Klebsiella pneumoniae (strain 342).